The chain runs to 207 residues: Dephospho-CoA kinase (207 aa).

In terms of domain architecture, DPCK spans 4–204 (VVGLTGGIGS…HLYLQFAEIF (201 aa)). An ATP-binding site is contributed by 12 to 17 (GSGKST).

The protein belongs to the CoaE family.

The protein localises to the cytoplasm. The catalysed reaction is 3'-dephospho-CoA + ATP = ADP + CoA + H(+). It functions in the pathway cofactor biosynthesis; coenzyme A biosynthesis; CoA from (R)-pantothenate: step 5/5. Functionally, catalyzes the phosphorylation of the 3'-hydroxyl group of dephosphocoenzyme A to form coenzyme A. The protein is Dephospho-CoA kinase of Aggregatibacter actinomycetemcomitans (Actinobacillus actinomycetemcomitans).